Consider the following 249-residue polypeptide: ATP synthase subunit a, chloroplastic (249 aa).

Transmembrane regions (helical) follow at residues 40–60 (QVLI…VLAV), 97–117 (VPFI…GALL), 136–156 (INTT…AGLS), 201–221 (LVVV…VMFL), and 222–242 (GLFT…AYIG).

It belongs to the ATPase A chain family. As to quaternary structure, F-type ATPases have 2 components, CF(1) - the catalytic core - and CF(0) - the membrane proton channel. CF(1) has five subunits: alpha(3), beta(3), gamma(1), delta(1), epsilon(1). CF(0) has four main subunits: a, b, b' and c.

Its subcellular location is the plastid. It is found in the chloroplast thylakoid membrane. In terms of biological role, key component of the proton channel; it plays a direct role in the translocation of protons across the membrane. The protein is ATP synthase subunit a, chloroplastic of Arabis hirsuta (Hairy rock-cress).